The primary structure comprises 446 residues: ATP-dependent protease ATPase subunit HslU (446 aa).

ATP-binding positions include I18, 60 to 65, D259, E324, and R396; that span reads GVGKTE.

It belongs to the ClpX chaperone family. HslU subfamily. As to quaternary structure, a double ring-shaped homohexamer of HslV is capped on each side by a ring-shaped HslU homohexamer. The assembly of the HslU/HslV complex is dependent on binding of ATP.

It is found in the cytoplasm. Its function is as follows. ATPase subunit of a proteasome-like degradation complex; this subunit has chaperone activity. The binding of ATP and its subsequent hydrolysis by HslU are essential for unfolding of protein substrates subsequently hydrolyzed by HslV. HslU recognizes the N-terminal part of its protein substrates and unfolds these before they are guided to HslV for hydrolysis. The protein is ATP-dependent protease ATPase subunit HslU of Baumannia cicadellinicola subsp. Homalodisca coagulata.